Here is a 937-residue protein sequence, read N- to C-terminus: Calsyntenin-2 (937 aa).

A signal peptide spans 1–22 (MKMRAITAMLLLVLSGQCGILA). Residues 23 to 818 (GKVNKHKPWI…NSDHISGTPP (796 aa)) are Extracellular-facing. Cadherin domains follow at residues 32-148 (IETS…SPVF) and 149-249 (REPL…KPGW). N86 carries N-linked (GlcNAc...) asparagine glycosylation. 3 N-linked (GlcNAc...) asparagine glycosylation sites follow: N330, N365, and N716. Residues 819-839 (AATVVIVMCIAALVVIVVLGI) traverse the membrane as a helical segment. Over 840–937 (YRIHTTHQDS…LEWDPSTLPY (98 aa)) the chain is Cytoplasmic. The interval 846–937 (HQDSSKEDEE…LEWDPSTLPY (92 aa)) is disordered. Polar residues predominate over residues 865-874 (DNSNLNSIEG). 2 stretches are compositionally biased toward acidic residues: residues 881–900 (VREE…DDLA) and 907–917 (ESEDSDEDEET).

The protein belongs to the calsyntenin family. Homooligomer and heterooligomer; mediates both homophilic and heterophilc interactions with clstn1 and clstn3 paralogs via cadherin domains. As to expression, by 48 hours post-fertilization (hpf), widely expressed in the brain, with strong expression in the telencephalon and the midbrain.

The protein localises to the postsynaptic cell membrane. Its subcellular location is the endoplasmic reticulum membrane. It is found in the golgi apparatus membrane. It localises to the cell projection. The protein resides in the dendrite. Postsynaptic adhesion molecule. Promotes synapse development by acting as a cell adhesion molecule at the postsynaptic membrane, which associates with presynaptic neurexins. This is Calsyntenin-2 (clstn2a) from Danio rerio (Zebrafish).